The sequence spans 137 residues: Large-conductance mechanosensitive channel (137 aa).

A run of 3 helical transmembrane segments spans residues 15 to 35 (IDLAIGVIIGGAFGGLVNSIV), 38 to 58 (IFMPIIGLITGGIDFSNMFIQ), and 80 to 100 (GNFITLLINFLIIAWVLFLFV).

Belongs to the MscL family. As to quaternary structure, homopentamer.

The protein localises to the cell inner membrane. In terms of biological role, channel that opens in response to stretch forces in the membrane lipid bilayer. May participate in the regulation of osmotic pressure changes within the cell. The polypeptide is Large-conductance mechanosensitive channel (Bartonella henselae (strain ATCC 49882 / DSM 28221 / CCUG 30454 / Houston 1) (Rochalimaea henselae)).